A 128-amino-acid polypeptide reads, in one-letter code: Histone H2A (128 aa).

The protein belongs to the histone H2A family. The nucleosome is a histone octamer containing two molecules each of H2A, H2B, H3 and H4 assembled in one H3-H4 heterotetramer and two H2A-H2B heterodimers. The octamer wraps approximately 147 bp of DNA.

It localises to the nucleus. It is found in the chromosome. Its function is as follows. Core component of nucleosome. Nucleosomes wrap and compact DNA into chromatin, limiting DNA accessibility to the cellular machineries which require DNA as a template. Histones thereby play a central role in transcription regulation, DNA repair, DNA replication and chromosomal stability. DNA accessibility is regulated via a complex set of post-translational modifications of histones, also called histone code, and nucleosome remodeling. The polypeptide is Histone H2A (HTA1) (Encephalitozoon cuniculi (strain GB-M1) (Microsporidian parasite)).